Consider the following 78-residue polypeptide: Short neurotoxin SNTX6 (78 aa).

The N-terminal stretch at 1 to 21 is a signal peptide; that stretch reads MKTLLLTFLVVTIVCLDLGYT. Cystine bridges form between cysteine 24-cysteine 40, cysteine 33-cysteine 58, cysteine 62-cysteine 70, and cysteine 71-cysteine 76.

It belongs to the three-finger toxin family. Short-chain subfamily. As to expression, expressed by the venom gland.

Its subcellular location is the secreted. In terms of biological role, this three-finger toxin binds and inhibits the nicotinic acetylcholine receptor (nAChR). In Ophiophagus hannah (King cobra), this protein is Short neurotoxin SNTX6.